Consider the following 198-residue polypeptide: Cell division protein SepF (198 aa).

Positions E170–Q198 are disordered. Residues A179–A188 are compositionally biased toward low complexity.

This sequence belongs to the SepF family. As to quaternary structure, homodimer. Interacts with FtsZ.

The protein localises to the cytoplasm. In terms of biological role, cell division protein that is part of the divisome complex and is recruited early to the Z-ring. Probably stimulates Z-ring formation, perhaps through the cross-linking of FtsZ protofilaments. Its function overlaps with FtsA. This chain is Cell division protein SepF, found in Nostoc sp. (strain PCC 7120 / SAG 25.82 / UTEX 2576).